Here is a 125-residue protein sequence, read N- to C-terminus: Large ribosomal subunit protein bL12 (125 aa).

Belongs to the bacterial ribosomal protein bL12 family. Homodimer. Part of the ribosomal stalk of the 50S ribosomal subunit. Forms a multimeric L10(L12)X complex, where L10 forms an elongated spine to which 2 to 4 L12 dimers bind in a sequential fashion. Binds GTP-bound translation factors.

Forms part of the ribosomal stalk which helps the ribosome interact with GTP-bound translation factors. Is thus essential for accurate translation. This is Large ribosomal subunit protein bL12 from Syntrophomonas wolfei subsp. wolfei (strain DSM 2245B / Goettingen).